A 336-amino-acid polypeptide reads, in one-letter code: Potassium channel subfamily K member 1 (336 aa).

Residues 1-20 lie on the Cytoplasmic side of the membrane; that stretch reads MLQSLAGSSCVRLVERHRSA. A helical transmembrane segment spans residues 21–41; sequence WCFGFLVLGYLLYLVFGAVVF. Residues 42–103 lie on the Extracellular side of the membrane; the sequence is SSVELPYEDL…SNASGNWNWD (62 aa). Asn-95 is a glycosylation site (N-linked (GlcNAc...) asparagine). The helical intramembrane region spans 104 to 116; that stretch reads FTSALFFASTVLS. The stretch at 117-122 is an intramembrane region; that stretch reads TTGYGH. The interval 117-122 is selectivity filter 1; that stretch reads TTGYGH. At 123–132 the chain is on the extracellular side; that stretch reads TVPLSDGGKA. A helical membrane pass occupies residues 133 to 156; it reads FCIIYSVIGIPFTLLFLTAVVQRV. The Cytoplasmic portion of the chain corresponds to 157–181; sequence TVHVTRRPVLYFHIRWGFSKQVVAI. The chain crosses the membrane as a helical span at residues 182–202; it reads VHAVLLGFVTVSCFFFIPAAV. At 203–211 the chain is on the extracellular side; that stretch reads FSVLEDDWN. An intramembrane region (helical) is located at residues 212–224; that stretch reads FLESFYFCFISLS. Residues 225–230 are selectivity filter 2; sequence TIGLGD. An intramembrane segment occupies 225-231; the sequence is TIGLGDY. The Extracellular portion of the chain corresponds to 232-243; sequence VPGEGYNQKFRE. A helical membrane pass occupies residues 244–267; it reads LYKIGITCYLLLGLIAMLVVLETF. Residues 268-336 lie on the Cytoplasmic side of the membrane; that stretch reads CELHELKKFR…PPYEDGSANH (69 aa). A Glycyl lysine isopeptide (Lys-Gly) (interchain with G-Cter in SUMO) cross-link involves residue Lys-274. Positions 293 to 299 are important for intracellular retention in recycling endosomes; that stretch reads IMEHDQL. The segment at 310–336 is disordered; that stretch reads GLKEEQKQNEPFVASQSPPYEDGSANH. Ser-326 is subject to Phosphoserine.

This sequence belongs to the two pore domain potassium channel (TC 1.A.1.8) family. Homodimer; disulfide-linked. Heterodimer with KCNK2; disulfide-linked. In astrocytes, forms mostly heterodimeric potassium channels with KCNK2, with only a minor proportion of functional channels containing homodimeric KCNK1. Interacts with KCNK3 and KCNK9, forming functional heterodimeric channels. Interacts with GNG4. Identified in a complex with PSD and ARF6; interacts only with PSD that is bound to ARF6. Interacts with UBE2I. In terms of processing, sumoylation is controversial. Sumoylated by UBE2I. Not sumoylated when expressed in xenopus oocytes or mammalian cells. Sumoylation inactivates the channel, but does not interfere with expression at the cell membrane. Sumoylation of a single subunit is sufficient to silence the dimeric channel. Sumoylation of KCNK1 is sufficient to silence heterodimeric channels formed by KCNK1 and KCNK3 or KCNK9. Desumoylated by SENP1; this activates the channel. Desumoylated by SENP1; this strongly increases halothane-mediated activation of heterodimeric channels formed with KCNK9. SENP1 treatment has no effect. As to expression, detected in brain and in kidney cortex and medulla, especially at the renal brush border membranes of the proximal convoluted tubules, in distal tubules and on intercalated cells of the collecting duct. Detected in cerebellum granule neurons. Detected in astrocytes in hippocampus stratum radiatum. Highly expressed in the stria vascularis in the cochlea. Detected in neurons in Scarpa's ganglion in the inner ear, at nerve terminals in the crista ampullaris, in supporting cells and dark cells, but not in hair cells (at protein level). Detected in the brain cerebellar granule cell layer, amygdala, thalamus reticular nucleus, habenula, mesencephalic trigeminal neurons, neocortex and piriform cortex, and at lower levels in the olfactory bulb. Detected in Scarpa's ganglia and crista ampullaris in the inner ear.

Its subcellular location is the cell membrane. It localises to the recycling endosome. It is found in the apical cell membrane. The protein resides in the cytoplasmic vesicle. The protein localises to the perikaryon. Its subcellular location is the cell projection. It localises to the dendrite. It is found in the synaptic cell membrane. It catalyses the reaction K(+)(in) = K(+)(out). The enzyme catalyses NH4(+)(in) = NH4(+)(out). The catalysed reaction is Na(+)(in) = Na(+)(out). It carries out the reaction Rb(+)(in) = Rb(+)(out). It catalyses the reaction Cs(+)(in) = Cs(+)(out). The enzyme catalyses Li(+)(in) = Li(+)(out). The catalysed reaction is L-glutamate(out) = L-glutamate(in). It carries out the reaction chloride(in) = chloride(out). With respect to regulation, inhibited by 100 uM quinine. Slightly inhibited by Ba(+). Activity is first increased and then decreased when the extracellular pH is lowered to 6.0. Its function is as follows. Ion channel that contributes to passive transmembrane potassium transport and to the regulation of the resting membrane potential in brain astrocytes, but also in kidney and in other tissues. Forms dimeric channels through which potassium ions pass in accordance with their electrochemical gradient. The channel is selective for K(+) ions at physiological potassium concentrations and at neutral pH, but becomes permeable to Na(+) at subphysiological K(+) levels and upon acidification of the extracellular medium. The homodimer has very low potassium channel activity, when expressed in heterologous systems, and can function as weakly inward rectifying potassium channel. Channel activity is modulated by activation of serotonin receptors. Heterodimeric channels containing KCNK1 and KCNK2 have much higher activity, and may represent the predominant form in astrocytes. Heterodimeric channels containing KCNK1 and KCNK3 or KCNK9 have much higher activity. Heterodimeric channels formed by KCNK1 and KCNK9 may contribute to halothane-sensitive currents. Mediates outward rectifying potassium currents in dentate gyrus granule cells and contributes to the regulation of their resting membrane potential. Contributes to the regulation of action potential firing in dentate gyrus granule cells and down-regulates their intrinsic excitability. Contributes to the regulation of the resting membrane potential of pancreatic beta cells. In astrocytes, the heterodimer formed by KCNK1 and KCNK2 is required for rapid glutamate release in response to activation of G-protein coupled receptors, such as F2R and CNR1. Required for normal ion and water transport in the kidney. The low channel activity of homodimeric KCNK1 may be due to sumoylation. The low channel activity may be due to rapid internalization from the cell membrane and retention in recycling endosomes. Permeable to monovalent cations with ion selectivity for K(+) &gt; Rb(+) &gt;&gt; NH4(+) &gt;&gt; Cs(+) = Na(+) = Li(+). This Rattus norvegicus (Rat) protein is Potassium channel subfamily K member 1.